The primary structure comprises 65 residues: UPF0434 protein HSM_0997 (65 aa).

This sequence belongs to the UPF0434 family.

This Histophilus somni (strain 2336) (Haemophilus somnus) protein is UPF0434 protein HSM_0997.